We begin with the raw amino-acid sequence, 536 residues long: Organic anion transporter 3 (536 aa).

Over 1–11 the chain is Cytoplasmic; it reads MTFSEILDRVG. Phosphoserine is present on Ser4. The helical transmembrane segment at 12–32 threads the bilayer; sequence SMGPFQYLHVTLLALPVLGIA. The Extracellular portion of the chain corresponds to 33 to 123; it reads NHNLLQIFTA…LVCSSNKLKE (91 aa). N-linked (GlcNAc...) asparagine glycosylation is found at Asn81 and Asn86. A helical transmembrane segment spans residues 124–144; that stretch reads MAQSIFMAGILVGGPVIGELS. Over 145-158 the chain is Cytoplasmic; that stretch reads DRFGRKPILTWSYL. Residues 159–179 form a helical membrane-spanning segment; sequence MLAASGSGAAFSPSLPVYMIF. Residue Arg180 is a topological domain, extracellular. Residues 181-201 traverse the membrane as a helical segment; the sequence is FLCGCSISGISLSTVILNVEW. Residues 202–212 are Cytoplasmic-facing; sequence VPTSMRAISST. The helical transmembrane segment at 213–233 threads the bilayer; sequence SIGYCYTIGQFILSGLAYAIP. Residues 234 to 236 are Extracellular-facing; that stretch reads QWR. Residues 237-257 form a helical membrane-spanning segment; it reads WLQLTSSAPFFIFSLLSWWVP. The Cytoplasmic segment spans residues 258–327; that stretch reads ESIRWLVLSG…FRVSILRRVT (70 aa). A helical membrane pass occupies residues 328-348; it reads FCLSLAWFSTGFAYYSLAMGV. The Extracellular portion of the chain corresponds to 349-354; it reads EEFGVN. Residues 355 to 375 traverse the membrane as a helical segment; sequence IYILQIIFGGVDIPAKFITIL. Topologically, residues 376 to 383 are cytoplasmic; it reads SLSYLGRR. A helical transmembrane segment spans residues 384–404; the sequence is ITQSFLLLLAGGAILALIFVP. Topologically, residues 405 to 411 are extracellular; the sequence is SEMQLLR. A helical transmembrane segment spans residues 412–432; it reads TALAVFGKGCLSGSFSCLFLY. Over 433–471 the chain is Cytoplasmic; that stretch reads TSELYPTVLRQTGMGISNVWARVGSMIAPLVKITGELQP. The helical transmembrane segment at 472-492 threads the bilayer; it reads FIPNVIFGTTALLGGSAAFFL. At 493-536 the chain is on the extracellular side; that stretch reads LETLNRPLPETIEDIQNWHKQVQKTKQESEAEKASQIIPLKTGG. Residues 515–536 are disordered; the sequence is QKTKQESEAEKASQIIPLKTGG.

The protein belongs to the major facilitator (TC 2.A.1) superfamily. Organic cation transporter (TC 2.A.1.19) family. Expressed in the liver, brain, kidney, choroid plexus and weakly in the eye. Moderately expressed (at protein level) in the brain capillary endothelial cells (BCEC).

The protein resides in the basolateral cell membrane. The catalysed reaction is estrone 3-sulfate(out) + glutarate(in) = estrone 3-sulfate(in) + glutarate(out). The enzyme catalyses estrone 3-sulfate(in) + 2-oxoglutarate(out) = estrone 3-sulfate(out) + 2-oxoglutarate(in). It catalyses the reaction glutarate(in) + 2-oxoglutarate(out) = glutarate(out) + 2-oxoglutarate(in). It carries out the reaction urate(in) + 2-oxoglutarate(out) = urate(out) + 2-oxoglutarate(in). The catalysed reaction is taurocholate(out) + glutarate(in) = taurocholate(in) + glutarate(out). The enzyme catalyses dehydroepiandrosterone 3-sulfate(out) + glutarate(in) = dehydroepiandrosterone 3-sulfate(in) + glutarate(out). It catalyses the reaction prostaglandin F2alpha(out) + glutarate(in) = prostaglandin F2alpha(in) + glutarate(out). It carries out the reaction prostaglandin F2alpha(out) + 2-oxoglutarate(in) = prostaglandin F2alpha(in) + 2-oxoglutarate(out). The catalysed reaction is (R)-carnitine(out) + 2-oxoglutarate(in) = (R)-carnitine(in) + 2-oxoglutarate(out). The enzyme catalyses glutarate(in) + (R)-carnitine(out) = glutarate(out) + (R)-carnitine(in). It catalyses the reaction prostaglandin E2(out) + 2-oxoglutarate(in) = prostaglandin E2(in) + 2-oxoglutarate(out). It carries out the reaction prostaglandin E2(out) + glutarate(in) = prostaglandin E2(in) + glutarate(out). The catalysed reaction is urate(in) + glutarate(out) = urate(out) + glutarate(in). The enzyme catalyses taurocholate(out) + 2-oxoglutarate(in) = taurocholate(in) + 2-oxoglutarate(out). It catalyses the reaction dehydroepiandrosterone 3-sulfate(out) + 2-oxoglutarate(in) = dehydroepiandrosterone 3-sulfate(in) + 2-oxoglutarate(out). It carries out the reaction kynurenate(out) + a dicarboxylate(in) = kynurenate(in) + a dicarboxylate(out). The catalysed reaction is (indol-3-yl)acetate(out) + a dicarboxylate(in) = (indol-3-yl)acetate(in) + a dicarboxylate(out). The enzyme catalyses indoxyl sulfate(out) + a dicarboxylate(in) = indoxyl sulfate(in) + a dicarboxylate(out). It catalyses the reaction N-benzoylglycine(out) + a dicarboxylate(in) = N-benzoylglycine(in) + a dicarboxylate(out). It carries out the reaction 3-carboxy-4-methyl-5-propyl-2-furanpropanoate(out) + a dicarboxylate(in) = 3-carboxy-4-methyl-5-propyl-2-furanpropanoate(in) + a dicarboxylate(out). The catalysed reaction is (6R)-L-erythro-5,6,7,8-tetrahydrobiopterin(out) + a dicarboxylate(in) = (6R)-L-erythro-5,6,7,8-tetrahydrobiopterin(in) + a dicarboxylate(out). The enzyme catalyses L-erythro-7,8-dihydrobiopterin(out) + a dicarboxylate(in) = L-erythro-7,8-dihydrobiopterin(in) + a dicarboxylate(out). It catalyses the reaction L-sepiapterin(out) + a dicarboxylate(in) = L-sepiapterin(in) + a dicarboxylate(out). Functionally, functions as an organic anion/dicarboxylate exchanger that couples organic anion uptake indirectly to the sodium gradient. Transports organic anions such as estrone 3-sulfate (E1S) and urate in exchange for dicarboxylates such as glutarate or ketoglutarate (2-oxoglutarate). Plays an important role in the excretion of endogenous and exogenous organic anions, especially from the kidney and the brain. E1S transport is pH- and chloride-dependent and may also involve E1S/cGMP exchange. Responsible for the transport of prostaglandin E2 (PGE2) and prostaglandin F2(alpha) (PGF2(alpha)) in the basolateral side of the renal tubule. Involved in the transport of neuroactive tryptophan metabolites kynurenate and xanthurenate. Functions as a biopterin transporters involved in the uptake and the secretion of coenzymes tetrahydrobiopterin (BH4), dihydrobiopterin (BH2) and sepiapterin to urine, thereby determining baseline levels of blood biopterins. May be involved in the basolateral transport of steviol, a metabolite of the popular sugar substitute stevioside. May participate in the detoxification/ renal excretion of drugs and xenobiotics, such as the histamine H(2)-receptor antagonists fexofenadine and cimetidine, the antibiotic benzylpenicillin (PCG), the anionic herbicide 2,4-dichloro-phenoxyacetate (2,4-D), the diagnostic agent p-aminohippurate (PAH), the antiviral acyclovir (ACV), and the mycotoxin ochratoxin (OTA), by transporting these exogenous organic anions across the cell membrane in exchange for dicarboxylates such as 2-oxoglutarate. Contributes to the renal uptake of potent uremic toxins (indoxyl sulfate (IS), indole acetate (IA), hippurate/N-benzoylglycine (HA) and 3-carboxy-4-methyl-5-propyl-2-furanpropionate (CMPF)), pravastatin, PCG, E1S and dehydroepiandrosterone sulfate (DHEAS), and is partly involved in the renal uptake of temocaprilat (an angiotensin-converting enzyme (ACE) inhibitor). May contribute to the release of cortisol in the adrenals. Involved in one of the detoxification systems on the choroid plexus (CP), removes substrates such as E1S or taurocholate (TC), PCG, 2,4-D and PAH, from the cerebrospinal fluid (CSF) to the blood for eventual excretion in urine and bile. Regulates the CSF concentration of histamine H(2)-receptor antagonists cimetidine and ranitidine at the CP. Also contributes to the uptake of several other organic compounds such as the prostanoids prostaglandin E(2) and prostaglandin F(2-alpha), L-carnitine, and the therapeutic drugs allopurinol, 6-mercaptopurine (6-MP) and 5-fluorouracil (5-FU). Mediates the uptake from brain of organic anions, such as E1S, PAH, and OTA. Mediates the transport of PAH, PCG, and the statins pravastatin and pitavastatin, from the cerebrum into the blood circulation across the blood-brain barrier (BBB). In summary, plays a role in the efflux of drugs and xenobiotics, helping reduce their undesired toxicological effects on the body. This chain is Organic anion transporter 3 (Slc22a8), found in Rattus norvegicus (Rat).